A 480-amino-acid polypeptide reads, in one-letter code: Gamma-aminobutyric acid receptor subunit rho-1 (480 aa).

Positions 1-21 are cleaved as a signal peptide; sequence MLAVRNMKFGIFLLWWGWVLA. At 22–281 the chain is on the extracellular side; the sequence is AESTVHWPGR…LYINFTLRRH (260 aa). The disordered stretch occupies residues 31-67; sequence REVHEPSKKGSRPQRQRRGAHDDAHKQGSPILKRSSD. Over residues 39 to 48 the composition is skewed to basic residues; that stretch reads KGSRPQRQRR. 4-aminobutanoate is bound at residue Arg126. Asn141 is a glycosylation site (N-linked (GlcNAc...) asparagine). Residue Ser190 coordinates 4-aminobutanoate. An intrachain disulfide couples Cys199 to Cys213. Glu218 serves as a coordination point for 4-aminobutanoate. N-linked (GlcNAc...) asparagine glycans are attached at residues Asn235 and Asn275. Residues 282–302 form a helical membrane-spanning segment; the sequence is IFFFLLQTYFPATLMVMLSWV. Residues 303–314 lie on the Cytoplasmic side of the membrane; that stretch reads SFWIDRRAVPAR. The chain crosses the membrane as a helical span at residues 315-335; it reads VPLGITTVLTMSTIITGVNAS. Residues 336 to 346 are Extracellular-facing; it reads MPRVSYIKAVD. The helical transmembrane segment at 347-367 threads the bilayer; the sequence is IYLWVSFVFVFLSVLEYAAVN. At 368 to 458 the chain is on the cytoplasmic side; the sequence is YLTTVQERKE…MRINTHAIDK (91 aa). A helical membrane pass occupies residues 459-479; it reads YSRIIFPAAYILFNLIYWSIF. Position 480 (Ser480) is a topological domain, extracellular.

Belongs to the ligand-gated ion channel (TC 1.A.9) family. Gamma-aminobutyric acid receptor (TC 1.A.9.5) subfamily. GABRR1 sub-subfamily. In terms of assembly, three rho subunits (rho-1/GBRR1, rho-2/GBRR2 and rho-3/GBRR3) coassemble either to form functional homopentamers or heteropentamers. Rho-1/GBRR1 subunits can also associate with alpha-1/GBRA1 subunits to form a functional GABAAR. Interacts with SQSTM1.

It is found in the postsynaptic cell membrane. It localises to the cell membrane. The catalysed reaction is chloride(in) = chloride(out). Its activity is regulated as follows. Inhibited by TPMPA, a rho-specific antagonist. Inhibited by picrotoxin, when forming a homopentamer. In contrast with other GABAARs, rho-1 GABAAR is not inhibited by bicuculline, when forming a homopentamer. Down-regulated by external protons when forming a homopentamer. Rho subunit of the pentameric ligand-gated chloride channels responsible for mediating the effects of gamma-aminobutyric acid (GABA), the major inhibitory neurotransmitter in the brain. Rho-containing GABA-gated chloride channels are a subclass of GABA(A) receptors (GABAARs) entirely composed of rho subunits, where GABA molecules bind at the rho intersubunit interfaces. When activated by GABA, rho-GABAARs selectively allow the flow of chloride anions across the cell membrane down their electrochemical gradient. Rho-1 subunits are primarily expressed in retina where rho-1-containing GABAARs may play a role in retinal neurotransmission. Rho-1 GABAARs are also involved in neuronal tonic (extrasynaptic) and phasic (synaptic) transmission in the Purkinje neurons of the cerebellum. Rho-1 GABAARs may also contribute to the regulation of glial development in the cerebellum by controlling extrasynaptic transmission. In Rattus norvegicus (Rat), this protein is Gamma-aminobutyric acid receptor subunit rho-1.